The sequence spans 296 residues: Light-independent protochlorophyllide reductase iron-sulfur ATP-binding protein (296 aa).

ATP contacts are provided by residues 39-44 (GIGKST) and Lys68. Ser43 contacts Mg(2+). The [4Fe-4S] cluster site is built by Cys124 and Cys158. Residue 209–210 (NR) participates in ATP binding.

The protein belongs to the NifH/BchL/ChlL family. As to quaternary structure, homodimer. Protochlorophyllide reductase is composed of three subunits; ChlL, ChlN and ChlB. The cofactor is [4Fe-4S] cluster.

It carries out the reaction chlorophyllide a + oxidized 2[4Fe-4S]-[ferredoxin] + 2 ADP + 2 phosphate = protochlorophyllide a + reduced 2[4Fe-4S]-[ferredoxin] + 2 ATP + 2 H2O. It functions in the pathway porphyrin-containing compound metabolism; chlorophyll biosynthesis (light-independent). Its function is as follows. Component of the dark-operative protochlorophyllide reductase (DPOR) that uses Mg-ATP and reduced ferredoxin to reduce ring D of protochlorophyllide (Pchlide) to form chlorophyllide a (Chlide). This reaction is light-independent. The L component serves as a unique electron donor to the NB-component of the complex, and binds Mg-ATP. The sequence is that of Light-independent protochlorophyllide reductase iron-sulfur ATP-binding protein from Prochlorococcus marinus (strain SARG / CCMP1375 / SS120).